Consider the following 149-residue polypeptide: Large ribosomal subunit protein bL9 (149 aa).

This sequence belongs to the bacterial ribosomal protein bL9 family.

Its function is as follows. Binds to the 23S rRNA. The protein is Large ribosomal subunit protein bL9 of Ligilactobacillus salivarius (strain UCC118) (Lactobacillus salivarius).